Consider the following 61-residue polypeptide: Protein translocase subunit SecE (61 aa).

Over 1-34 (MAELQERIRHFWKESRRAFLVTKKPNWATYKRAA) the chain is Cytoplasmic. A helical transmembrane segment spans residues 35–55 (KITGLGIILIGLIGMLIRIVG). The Extracellular segment spans residues 56–61 (ILILGG).

This sequence belongs to the SecE/SEC61-gamma family. Component of the Sec protein translocase complex. Heterotrimer consisting of alpha (SecY), beta (SecG) and gamma (SecE) subunits. The heterotrimers can form oligomers, although 1 heterotrimer is thought to be able to translocate proteins. Interacts with the ribosome. May interact with SecDF, and other proteins may be involved.

It is found in the cell membrane. Essential subunit of the protein translocation channel SecYEG. Clamps together the 2 halves of SecY. May contact the channel plug during translocation. The protein is Protein translocase subunit SecE of Pyrococcus furiosus (strain ATCC 43587 / DSM 3638 / JCM 8422 / Vc1).